The chain runs to 572 residues: Proline--tRNA ligase (572 aa).

This sequence belongs to the class-II aminoacyl-tRNA synthetase family. ProS type 1 subfamily. In terms of assembly, homodimer.

Its subcellular location is the cytoplasm. It catalyses the reaction tRNA(Pro) + L-proline + ATP = L-prolyl-tRNA(Pro) + AMP + diphosphate. Catalyzes the attachment of proline to tRNA(Pro) in a two-step reaction: proline is first activated by ATP to form Pro-AMP and then transferred to the acceptor end of tRNA(Pro). As ProRS can inadvertently accommodate and process non-cognate amino acids such as alanine and cysteine, to avoid such errors it has two additional distinct editing activities against alanine. One activity is designated as 'pretransfer' editing and involves the tRNA(Pro)-independent hydrolysis of activated Ala-AMP. The other activity is designated 'posttransfer' editing and involves deacylation of mischarged Ala-tRNA(Pro). The misacylated Cys-tRNA(Pro) is not edited by ProRS. The chain is Proline--tRNA ligase from Enterobacter sp. (strain 638).